The chain runs to 240 residues: 1-(5-phosphoribosyl)-5-[(5-phosphoribosylamino)methylideneamino] imidazole-4-carboxamide isomerase 1 (240 aa).

The active-site Proton acceptor is the aspartate 8. Aspartate 129 functions as the Proton donor in the catalytic mechanism.

It belongs to the HisA/HisF family.

It localises to the cytoplasm. The enzyme catalyses 1-(5-phospho-beta-D-ribosyl)-5-[(5-phospho-beta-D-ribosylamino)methylideneamino]imidazole-4-carboxamide = 5-[(5-phospho-1-deoxy-D-ribulos-1-ylimino)methylamino]-1-(5-phospho-beta-D-ribosyl)imidazole-4-carboxamide. It participates in amino-acid biosynthesis; L-histidine biosynthesis; L-histidine from 5-phospho-alpha-D-ribose 1-diphosphate: step 4/9. This Ruegeria pomeroyi (strain ATCC 700808 / DSM 15171 / DSS-3) (Silicibacter pomeroyi) protein is 1-(5-phosphoribosyl)-5-[(5-phosphoribosylamino)methylideneamino] imidazole-4-carboxamide isomerase 1.